The chain runs to 483 residues: Glutamate--tRNA ligase 1 (483 aa).

A 'HIGH' region motif is present at residues 9-19; it reads PSPTGFLHIGG. The short motif at 238 to 242 is the 'KMSKS' region element; that stretch reads KLSKR. K241 provides a ligand contact to ATP.

Belongs to the class-I aminoacyl-tRNA synthetase family. Glutamate--tRNA ligase type 1 subfamily. Monomer.

It localises to the cytoplasm. The catalysed reaction is tRNA(Glu) + L-glutamate + ATP = L-glutamyl-tRNA(Glu) + AMP + diphosphate. Catalyzes the attachment of glutamate to tRNA(Glu) in a two-step reaction: glutamate is first activated by ATP to form Glu-AMP and then transferred to the acceptor end of tRNA(Glu). In Bartonella henselae (strain ATCC 49882 / DSM 28221 / CCUG 30454 / Houston 1) (Rochalimaea henselae), this protein is Glutamate--tRNA ligase 1.